Consider the following 142-residue polypeptide: ATP synthase epsilon chain (142 aa).

The protein belongs to the ATPase epsilon chain family. F-type ATPases have 2 components, CF(1) - the catalytic core - and CF(0) - the membrane proton channel. CF(1) has five subunits: alpha(3), beta(3), gamma(1), delta(1), epsilon(1). CF(0) has three main subunits: a, b and c.

The protein localises to the cell inner membrane. Functionally, produces ATP from ADP in the presence of a proton gradient across the membrane. This Coxiella burnetii (strain CbuK_Q154) (Coxiella burnetii (strain Q154)) protein is ATP synthase epsilon chain.